An 829-amino-acid polypeptide reads, in one-letter code: Periplasmic nitrate reductase (829 aa).

Residues 1-36 (MARRDFIKQTAAAAAATVAGVPLTGYTQNIVTESEA) constitute a signal peptide (tat-type signal). A 4Fe-4S Mo/W bis-MGD-type domain is found at 39 to 95 (LKWSKAPCRFCGTGCGVNVAVKDNQVVATHGDFNAEVNKGLNCVKGYFLSKIMYGSD). [4Fe-4S] cluster is bound by residues Cys-46, Cys-49, Cys-53, and Cys-81. Mo-bis(molybdopterin guanine dinucleotide) is bound by residues Lys-83, Gln-150, Asn-175, Cys-179, 212–219 (WGSNMAEM), 243–247 (STFEH), 262–264 (QSD), Met-373, Gln-377, Asn-483, 509–510 (SD), Lys-532, Asp-559, and 719–728 (TGRVLEHWHS). Trp-795 lines the substrate pocket. Asn-803 and Lys-820 together coordinate Mo-bis(molybdopterin guanine dinucleotide).

Belongs to the prokaryotic molybdopterin-containing oxidoreductase family. NasA/NapA/NarB subfamily. Component of the periplasmic nitrate reductase NapAB complex composed of NapA and NapB. Requires [4Fe-4S] cluster as cofactor. The cofactor is Mo-bis(molybdopterin guanine dinucleotide). Predicted to be exported by the Tat system. The position of the signal peptide cleavage has not been experimentally proven.

It is found in the periplasm. The catalysed reaction is 2 Fe(II)-[cytochrome] + nitrate + 2 H(+) = 2 Fe(III)-[cytochrome] + nitrite + H2O. Catalytic subunit of the periplasmic nitrate reductase complex NapAB. Receives electrons from NapB and catalyzes the reduction of nitrate to nitrite. The sequence is that of Periplasmic nitrate reductase from Bordetella bronchiseptica (strain ATCC BAA-588 / NCTC 13252 / RB50) (Alcaligenes bronchisepticus).